A 566-amino-acid polypeptide reads, in one-letter code: Sodium-dependent high-affinity dicarboxylate transporter 3 (566 aa).

A run of 12 helical transmembrane segments spans residues 55–75, 92–112, 123–139, 162–182, 219–239, 268–288, 329–349, 352–372, 400–420, 439–459, 496–516, and 521–541; these read LVLV…GPEW, VMPL…VGVL, NDTN…AAAV, WIML…SNTA, MATG…TGTA, WIFF…MTLV, ILLS…GVFF, GAYT…VLPS, ETFP…AAGV, LPLW…TNIC, FAFI…SGMV, and MAFV…LYMN.

It belongs to the SLC13A/DASS transporter (TC 2.A.47) family. NADC subfamily. Nad-1 and nad-2 are coexpressed in the intestinal tract from early larvae to adults, expression is from the pharynx through to the anus. Expression level is significantly greater in the anterior half of the intestine than in the posterior half.

It localises to the membrane. Functionally, high-affinity sodium-dicarboxylate cotransporter that accepts a range of tricarboxylic acid-cycle intermediates with 4-5 carbon atoms. There is no interaction with monocarboxylates. Plays a role in the regulation of life span. The protein is Sodium-dependent high-affinity dicarboxylate transporter 3 (nac-3) of Caenorhabditis elegans.